The primary structure comprises 361 residues: ETS translocation variant 3-like protein (361 aa).

The segment at residues Ile-39–Asn-120 is a DNA-binding region (ETS). Positions Leu-178–Val-201 are disordered.

This sequence belongs to the ETS family.

The protein resides in the nucleus. Functionally, transcriptional regulator. The chain is ETS translocation variant 3-like protein (ETV3L) from Homo sapiens (Human).